A 597-amino-acid chain; its full sequence is Elongation factor 4 (597 aa).

The 183-residue stretch at 2-184 (KNIRNFSIIA…TIVAKVPAPE (183 aa)) folds into the tr-type G domain. Residues 14–19 (DHGKST) and 131–134 (NKID) each bind GTP.

Belongs to the TRAFAC class translation factor GTPase superfamily. Classic translation factor GTPase family. LepA subfamily.

It localises to the cell inner membrane. It catalyses the reaction GTP + H2O = GDP + phosphate + H(+). Functionally, required for accurate and efficient protein synthesis under certain stress conditions. May act as a fidelity factor of the translation reaction, by catalyzing a one-codon backward translocation of tRNAs on improperly translocated ribosomes. Back-translocation proceeds from a post-translocation (POST) complex to a pre-translocation (PRE) complex, thus giving elongation factor G a second chance to translocate the tRNAs correctly. Binds to ribosomes in a GTP-dependent manner. This Francisella tularensis subsp. mediasiatica (strain FSC147) protein is Elongation factor 4.